The primary structure comprises 125 residues: Holo-[acyl-carrier-protein] synthase (125 aa).

Residues Asp8 and Glu57 each contribute to the Mg(2+) site.

It belongs to the P-Pant transferase superfamily. AcpS family. Mg(2+) serves as cofactor.

The protein localises to the cytoplasm. The catalysed reaction is apo-[ACP] + CoA = holo-[ACP] + adenosine 3',5'-bisphosphate + H(+). Its function is as follows. Transfers the 4'-phosphopantetheine moiety from coenzyme A to a Ser of acyl-carrier-protein. In Nitrosomonas eutropha (strain DSM 101675 / C91 / Nm57), this protein is Holo-[acyl-carrier-protein] synthase.